The following is a 336-amino-acid chain: Tryptophan--tRNA ligase (336 aa).

Residues 9 to 11 (QPS) and 17 to 18 (GN) contribute to the ATP site. A 'HIGH' region motif is present at residues 10–18 (PSGTPTIGN). Residue Asp-134 participates in L-tryptophan binding. Residues 146-148 (GDD), Ile-189, and 198-202 (KMSKS) contribute to the ATP site. The 'KMSKS' region motif lies at 198 to 202 (KMSKS).

This sequence belongs to the class-I aminoacyl-tRNA synthetase family. In terms of assembly, homodimer.

The protein localises to the cytoplasm. It carries out the reaction tRNA(Trp) + L-tryptophan + ATP = L-tryptophyl-tRNA(Trp) + AMP + diphosphate + H(+). Functionally, catalyzes the attachment of tryptophan to tRNA(Trp). This chain is Tryptophan--tRNA ligase, found in Enterococcus faecalis (strain ATCC 700802 / V583).